Reading from the N-terminus, the 514-residue chain is Glutathione-binding protein GsiB (514 aa).

The first 27 residues, 1-27, serve as a signal peptide directing secretion; the sequence is MSVMTIQRRWLVAAGVTAAMVASPVWA.

This sequence belongs to the bacterial solute-binding protein 5 family. In terms of assembly, the complex is composed of two ATP-binding proteins (GsiA), two transmembrane proteins (GsiC and GsiD) and a solute-binding protein (GsiB).

It is found in the periplasm. Its function is as follows. Part of the ABC transporter complex GsiABCD involved in glutathione import. Binds glutathione. This is Glutathione-binding protein GsiB from Pectobacterium atrosepticum (strain SCRI 1043 / ATCC BAA-672) (Erwinia carotovora subsp. atroseptica).